A 408-amino-acid polypeptide reads, in one-letter code: Multidrug resistance protein MdtG (408 aa).

Helical transmembrane passes span 16-36 (LIVA…VMPF), 58-78 (IVFS…GGLA), 92-112 (LGMG…QFLI), 115-135 (ALLG…ATQV), 146-166 (TLST…GLLA), 173-193 (PVFF…LFCI), 224-244 (LFVT…ILTL), 256-276 (VAFI…LSAP), 290-310 (ILIT…YVQT), 319-339 (FLLG…LVYN), and 378-398 (AVFL…WNSL).

The protein belongs to the major facilitator superfamily. DHA1 family. MdtG (TC 2.A.1.2.20) subfamily.

It localises to the cell inner membrane. Its function is as follows. Confers resistance to fosfomycin and deoxycholate. This is Multidrug resistance protein MdtG from Escherichia coli O139:H28 (strain E24377A / ETEC).